A 350-amino-acid polypeptide reads, in one-letter code: Heat-inducible transcription repressor HrcA (350 aa).

The protein belongs to the HrcA family.

Functionally, negative regulator of class I heat shock genes (grpE-dnaK-dnaJ and groELS operons). Prevents heat-shock induction of these operons. In Xanthomonas oryzae pv. oryzae (strain KACC10331 / KXO85), this protein is Heat-inducible transcription repressor HrcA.